Here is a 23-residue protein sequence, read N- to C-terminus: Magainin-R1 (23 aa).

In terms of tissue distribution, expressed by the skin glands.

It is found in the secreted. Functionally, antimicrobial peptide. The protein is Magainin-R1 of Xenopus ruwenzoriensis (Uganda clawed frog).